Reading from the N-terminus, the 410-residue chain is 2-hydroxy-5-methyl-1-naphthoate 7-hydroxylase (410 aa).

Residue C350 participates in heme binding.

The protein belongs to the cytochrome P450 family. Heme serves as cofactor.

It catalyses the reaction 2-hydroxy-5-methyl-1-naphthoate + 2 reduced [2Fe-2S]-[ferredoxin] + O2 + 2 H(+) = 2,7-dihydroxy-5-methyl-1-naphthoate + 2 oxidized [2Fe-2S]-[ferredoxin] + H2O. It functions in the pathway antibiotic biosynthesis. Its function is as follows. Involved in the biosynthesis of the naphthoic acid (NA) moiety in the chromophore of the enedyine antitumor antibiotic neocarzinostatin (NCS). Catalyzes the hydroxylation at C-7 position of 2-hydroxy-5-methyl-1-naphthoate to yield 2,7-dihydroxy-5-methyl-1-naphthoate. This is 2-hydroxy-5-methyl-1-naphthoate 7-hydroxylase from Streptomyces carzinostaticus.